Reading from the N-terminus, the 83-residue chain is MARKKGGSGAKNGRDSNPKYLGVKVYGGTEVSAGSILVRQRGTSIHPGNNVGCGKDYTLFAKADGVVTYHERKGRKLASIEAK.

The protein belongs to the bacterial ribosomal protein bL27 family.

The chain is Large ribosomal subunit protein bL27 from Treponema denticola (strain ATCC 35405 / DSM 14222 / CIP 103919 / JCM 8153 / KCTC 15104).